A 129-amino-acid polypeptide reads, in one-letter code: Glycophorin-A (129 aa).

An N-terminal signal peptide occupies residues 1–17 (MYEKIVIVLLLSGYIST). Glutamine 18 bears the Pyrrolidone carboxylic acid mark. The Extracellular portion of the chain corresponds to 18–82 (QDVTEIIPHE…QLVHIFSEPV (65 aa)). Residues serine 29 and serine 30 are each glycosylated (O-linked (GalNAc...) serine). The O-linked (GalNAc...) threonine glycan is linked to threonine 34. O-linked (GalNAc...) serine glycosylation occurs at serine 40. Residues threonine 41 and threonine 48 are each glycosylated (O-linked (GalNAc...) threonine). Serine 56 is a glycosylation site (O-linked (GalNAc...) serine). Residues 83 to 103 (IIGIIYAVMLGIIITILSIAF) traverse the membrane as a helical segment. The Cytoplasmic segment spans residues 104–129 (CIGQLTKKSSLPAQVASPEDVDPEVL).

This sequence belongs to the glycophorin-A family. As to quaternary structure, homodimer. Component of the ankyrin-1 complex in the erythrocyte, composed of ANK1, RHCE, RHAG, SLC4A1, EPB42, GYPA, GYPB and AQP1. Interacts with SLC4A1; a GYPA monomer is bound at each end of the SLC4A1 dimer forming a heterotetramer.

Its subcellular location is the membrane. Component of the ankyrin-1 complex, a multiprotein complex involved in the stability and shape of the erythrocyte membrane. Glycophorin A is the major intrinsic membrane protein of the erythrocyte. The N-terminal glycosylated segment, which lies outside the erythrocyte membrane, has MN blood group receptors. Appears to be important for the function of SLC4A1 and is required for high activity of SLC4A1. May be involved in translocation of SLC4A1 to the plasma membrane. The polypeptide is Glycophorin-A (Canis lupus familiaris (Dog)).